A 233-amino-acid chain; its full sequence is B-cell lymphoma/leukemia 10 (233 aa).

Position 1 is an N-acetylmethionine (M1). Residues 13 to 101 (LTEVKKDALE…QSFLIQKITD (89 aa)) enclose the CARD domain. Glycyl lysine isopeptide (Lys-Gly) (interchain with G-Cter in ubiquitin) cross-links involve residues K17, K31, and K63. S138 carries the post-translational modification Phosphoserine. The tract at residues 185–233 (SSFSSATLPRPGDPGAPPLPPDLRLEEGGSCGNSSEMFLPLRSRALSRQ) is disordered. Residues 195–205 (PGDPGAPPLPP) are compositionally biased toward pro residues.

In terms of assembly, homomultimer; homooligomerized following recruitment by CARD domain-containing proteins that form a nucleating helical template that recruits BCL10 via CARD-CARD interaction. Self-associates by CARD-CARD interaction and interacts with other CARD-proteins such as CARD9, CARD10, CARD11 and CARD14. Forms a complex with CARD14 and MALT1; resulting in the formation of a CBM (CARD14-BCL10-MALT1) complex. Forms a complex with CARD11 and MALT1; resulting in the formation of a CBM (CARD11-BCL10-MALT1) complex. Forms a complex with CARD9 and MALT1; resulting in the formation of a CBM (CARD9-BCL10-MALT1) complex. Found in a membrane raft complex, at least composed of BCL10, CARD11, DPP4 and IKBKB. Binds caspase-9 with its C-terminal domain. Interacts with TRAF2 and BIRC2/c-IAP2. Interacts with PELI2 and SOCS3; these interactions may be mutually exclusive. Phosphorylated by IKBKB/IKKB. In terms of processing, ubiquitinated via both 'Lys-63'-linked and linear ('Met-1'-linked) polyubiquitin chains in response to T-cell receptor (TCR) activation. Ubiquitination is recognized by IKBKG/NEMO, the regulatory subunit of I-kappa-B kinase (IKK), and is required for TCR-induced NF-kappa-B activation. Linear ubiquitination at Lys-17, Lys-31 and Lys-63 is mediated by RNF31/HOIP; linear ubiquitination is recognized with much higher affinity than 'Lys-63'-linked ubiquitin by IKBKG/NEMO. CARD11 is required for linear ubiquitination by HOIP by promoting the targeting of BCL10 to RNF31/HOIP. Post-translationally, proteolytically cleaved by MALT1; required for T-cell activation. Highly expressed in heart, brain, spleen, lung, liver, skeletal muscle, kidney and testis. Detected in developing brain, olfactory epithelium, tongue, whisker follicles, salivary gland, heart, lung, liver and intestinal epithelia of stage 15 embryos.

It is found in the cytoplasm. Its subcellular location is the membrane raft. Functionally, plays a key role in both adaptive and innate immune signaling by bridging CARD domain-containing proteins to immune activation. Acts by channeling adaptive and innate immune signaling downstream of CARD domain-containing proteins CARD9, CARD11 and CARD14 to activate NF-kappa-B and MAP kinase p38 (MAPK11, MAPK12, MAPK13 and/or MAPK14) pathways which stimulate expression of genes encoding pro-inflammatory cytokines and chemokines. Recruited by activated CARD domain-containing proteins: homooligomerized CARD domain-containing proteins form a nucleating helical template that recruits BCL10 via CARD-CARD interaction, thereby promoting polymerization of BCL10, subsequent recruitment of MALT1 and formation of a CBM complex. This leads to activation of NF-kappa-B and MAP kinase p38 (MAPK11, MAPK12, MAPK13 and/or MAPK14) pathways which stimulate expression of genes encoding pro-inflammatory cytokines and chemokines. Activated by CARD9 downstream of C-type lectin receptors; CARD9-mediated signals are essential for antifungal immunity. Activated by CARD11 downstream of T-cell receptor (TCR) and B-cell receptor (BCR). Promotes apoptosis, pro-caspase-9 maturation and activation of NF-kappa-B via NIK and IKK. The chain is B-cell lymphoma/leukemia 10 (Bcl10) from Mus musculus (Mouse).